Consider the following 138-residue polypeptide: Small ribosomal subunit protein bS6 (138 aa).

The disordered stretch occupies residues 94–138 (VKQDGPLPTPKPTSKEDETEKEEVKPTEDKTESPAQEEKKEDSKE). Residues 106–138 (TSKEDETEKEEVKPTEDKTESPAQEEKKEDSKE) show a composition bias toward basic and acidic residues.

It belongs to the bacterial ribosomal protein bS6 family.

In terms of biological role, binds together with bS18 to 16S ribosomal RNA. The sequence is that of Small ribosomal subunit protein bS6 from Prochlorococcus marinus (strain NATL1A).